We begin with the raw amino-acid sequence, 424 residues long: Glutamate-1-semialdehyde 2,1-aminomutase (424 aa).

An N6-(pyridoxal phosphate)lysine modification is found at lysine 263.

Belongs to the class-III pyridoxal-phosphate-dependent aminotransferase family. HemL subfamily. In terms of assembly, homodimer. Requires pyridoxal 5'-phosphate as cofactor.

The protein resides in the cytoplasm. It catalyses the reaction (S)-4-amino-5-oxopentanoate = 5-aminolevulinate. It participates in porphyrin-containing compound metabolism; protoporphyrin-IX biosynthesis; 5-aminolevulinate from L-glutamyl-tRNA(Glu): step 2/2. This chain is Glutamate-1-semialdehyde 2,1-aminomutase, found in Campylobacter jejuni (strain RM1221).